The chain runs to 423 residues: Enolase (423 aa).

Gln-166 is a (2R)-2-phosphoglycerate binding site. The Proton donor role is filled by Glu-208. Positions 242, 283, and 310 each coordinate Mg(2+). (2R)-2-phosphoglycerate contacts are provided by Lys-335, Arg-364, Ser-365, and Lys-386. Lys-335 (proton acceptor) is an active-site residue.

The protein belongs to the enolase family. The cofactor is Mg(2+).

The protein localises to the cytoplasm. It localises to the secreted. Its subcellular location is the cell surface. The enzyme catalyses (2R)-2-phosphoglycerate = phosphoenolpyruvate + H2O. The protein operates within carbohydrate degradation; glycolysis; pyruvate from D-glyceraldehyde 3-phosphate: step 4/5. Its function is as follows. Catalyzes the reversible conversion of 2-phosphoglycerate (2-PG) into phosphoenolpyruvate (PEP). It is essential for the degradation of carbohydrates via glycolysis. In Elusimicrobium minutum (strain Pei191), this protein is Enolase.